The following is a 232-amino-acid chain: Large ribosomal subunit protein uL1 (232 aa).

Belongs to the universal ribosomal protein uL1 family. As to quaternary structure, part of the 50S ribosomal subunit.

Binds directly to 23S rRNA. The L1 stalk is quite mobile in the ribosome, and is involved in E site tRNA release. Functionally, protein L1 is also a translational repressor protein, it controls the translation of the L11 operon by binding to its mRNA. The protein is Large ribosomal subunit protein uL1 of Azorhizobium caulinodans (strain ATCC 43989 / DSM 5975 / JCM 20966 / LMG 6465 / NBRC 14845 / NCIMB 13405 / ORS 571).